The sequence spans 129 residues: C-phycocyanin beta subunit (129 aa).

At asparagine 62 the chain carries N4-methylasparagine. Cysteine 116 lines the (2R,3E)-phycocyanobilin pocket.

It belongs to the phycobiliprotein family. As to quaternary structure, heterodimer of an alpha and a beta subunit, which further assembles into trimers and the trimers into hexamers. Post-translationally, two isomers exist. In terms of processing, contains two covalently linked bilin chromophores.

The protein localises to the cellular thylakoid membrane. Its function is as follows. Light-harvesting photosynthetic bile pigment-protein from the phycobiliprotein complex (phycobilisome, PBS). Phycocyanin is the major phycobiliprotein in the PBS rod. This is C-phycocyanin beta subunit from Aphanizomenon flos-aquae.